We begin with the raw amino-acid sequence, 370 residues long: MSEHREAVRTARSVVVKIGTTALTTPSGVFDANRLASLVEAIEGRMKAGSDVVIVSSGAIAAGIEPLGLSKRPTDLATKQAAASVGQVALVNAWSAAFAVYNRTVGQVLLTAHDISMRVQHNNAQRTLDRLRALHAVAIVNENDTVATNEIRFGDNDRLSALVAHLVGADALILLSDIDGLYDGDPRKATPDKPARFIPEVAAQGDLDGVVAGRGSSLGTGGMASKLSSALLAADAGVPVLLAAAADAGRALDDASVGTVFAPRPERMSARKFWMRYAAESAGALTLDDGAVRAVIKQRRSLLPAGITSVTGRFHGGDVVDLRALDGHTVARGVVAYDQAELASIIGRSTHELPVEMRRPAVHADDLVRT.

Lys17 lines the ATP pocket. Residues Ser57, Asp144, and Asn156 each coordinate substrate. Residues 176-177 and 220-226 contribute to the ATP site; these read SD and TGGMASK. Residues 282–360 form the PUA domain; the sequence is AGALTLDDGA…HELPVEMRRP (79 aa).

It belongs to the glutamate 5-kinase family.

The protein resides in the cytoplasm. The catalysed reaction is L-glutamate + ATP = L-glutamyl 5-phosphate + ADP. It functions in the pathway amino-acid biosynthesis; L-proline biosynthesis; L-glutamate 5-semialdehyde from L-glutamate: step 1/2. Catalyzes the transfer of a phosphate group to glutamate to form L-glutamate 5-phosphate. This chain is Glutamate 5-kinase, found in Mycolicibacterium smegmatis (strain ATCC 700084 / mc(2)155) (Mycobacterium smegmatis).